Here is a 103-residue protein sequence, read N- to C-terminus: Small ribosomal subunit protein uS10 (103 aa).

This sequence belongs to the universal ribosomal protein uS10 family. As to quaternary structure, part of the 30S ribosomal subunit.

Functionally, involved in the binding of tRNA to the ribosomes. This Psychrobacter sp. (strain PRwf-1) protein is Small ribosomal subunit protein uS10.